Consider the following 469-residue polypeptide: Aspartyl/glutamyl-tRNA(Asn/Gln) amidotransferase subunit B (469 aa).

Belongs to the GatB/GatE family. GatB subfamily. In terms of assembly, heterotrimer of A, B and C subunits.

The catalysed reaction is L-glutamyl-tRNA(Gln) + L-glutamine + ATP + H2O = L-glutaminyl-tRNA(Gln) + L-glutamate + ADP + phosphate + H(+). It carries out the reaction L-aspartyl-tRNA(Asn) + L-glutamine + ATP + H2O = L-asparaginyl-tRNA(Asn) + L-glutamate + ADP + phosphate + 2 H(+). Its function is as follows. Allows the formation of correctly charged Asn-tRNA(Asn) or Gln-tRNA(Gln) through the transamidation of misacylated Asp-tRNA(Asn) or Glu-tRNA(Gln) in organisms which lack either or both of asparaginyl-tRNA or glutaminyl-tRNA synthetases. The reaction takes place in the presence of glutamine and ATP through an activated phospho-Asp-tRNA(Asn) or phospho-Glu-tRNA(Gln). The protein is Aspartyl/glutamyl-tRNA(Asn/Gln) amidotransferase subunit B of Methanococcus maripaludis (strain C6 / ATCC BAA-1332).